We begin with the raw amino-acid sequence, 144 residues long: Large-conductance mechanosensitive channel (144 aa).

The next 2 membrane-spanning stretches (helical) occupy residues 14 to 34 (VLDM…VTSF) and 81 to 101 (GTFL…FLII).

Belongs to the MscL family. Homopentamer.

It localises to the cell inner membrane. Channel that opens in response to stretch forces in the membrane lipid bilayer. May participate in the regulation of osmotic pressure changes within the cell. This is Large-conductance mechanosensitive channel from Bdellovibrio bacteriovorus (strain ATCC 15356 / DSM 50701 / NCIMB 9529 / HD100).